Here is a 612-residue protein sequence, read N- to C-terminus: MFS siderochrome iron transporter B (612 aa).

Residues 1–86 are Cytoplasmic-facing; the sequence is MLHVLSVGPS…GAQAGVKKIE (86 aa). The segment at 55–78 is disordered; it reads DKEAAHAPANAETNNEEANPSDGA. Positions 60–72 are enriched in low complexity; sequence HAPANAETNNEEA. The helical transmembrane segment at 87–104 threads the bilayer; it reads AVTLSWTRGTAIWFLTLV. Residues 105–127 are Extracellular-facing; the sequence is NDFRLSMYTSLNAYATSSFLGHS. A helical membrane pass occupies residues 128-148; it reads LLTVINIVSYVMGGSVYIPMA. Topologically, residues 149–156 are cytoplasmic; it reads KALDLWGR. Residues 157–177 form a helical membrane-spanning segment; that stretch reads AEGFLLMTFFCILGLILLASS. Over 178–187 the chain is Extracellular; the sequence is QNLPTYCAGQ. The chain crosses the membrane as a helical span at residues 188–208; the sequence is VFYKVGFGGLSYTWNVLAADV. Residues 209 to 215 are Cytoplasmic-facing; sequence TNLRNRG. A helical transmembrane segment spans residues 216–236; the sequence is LAFAFTSSPALISAFAGSKAA. The Extracellular segment spans residues 237–246; that stretch reads SDLLAHSTWR. The chain crosses the membrane as a helical span at residues 247–267; sequence WGFGMWAIILPVVALPIYGLL. The Cytoplasmic portion of the chain corresponds to 268-302; the sequence is AYHLRQAEKKGVLVKETRDWSITPKTVWWAIMEFD. Residues 303 to 323 traverse the membrane as a helical segment; it reads LPGVLLFAGGFVIFLLPFTLA. Topologically, residues 324–334 are extracellular; it reads ATAPHGYQTDY. Residues 335-355 traverse the membrane as a helical segment; that stretch reads IIAMITLGLALIIAFGFYEML. The Cytoplasmic portion of the chain corresponds to 356-370; the sequence is VAPVPFLNYKFLIDR. Residues 371–393 form a helical membrane-spanning segment; the sequence is TVLGACLLDMTYQVSYYCYASYL. Residues 394 to 409 lie on the Extracellular side of the membrane; sequence PSFLQVVYELDVATAG. The chain crosses the membrane as a helical span at residues 410–430; it reads YVTNTFSVVSFVFLFFAGWLI. Over 431–435 the chain is Cytoplasmic; that stretch reads RWTGR. Residues 436 to 456 form a helical membrane-spanning segment; it reads FKWILWVCVPLYIFGLGLMIH. Residues 457-463 lie on the Extracellular side of the membrane; that stretch reads FRQPGGY. A helical membrane pass occupies residues 464-484; it reads IGYIVMCEIFFSVAGSVFILC. At 485-498 the chain is on the cytoplasmic side; that stretch reads VQLAVLASVDHQHV. A helical transmembrane segment spans residues 499–519; the sequence is AAVLALLFVMGSIGGSIGSAI. The Extracellular segment spans residues 520–575; sequence CGAIWTSTFLSRLERNLPASAMPDLSLIYSSLPTQLSYPVGSATRTAIVEAYGYAQ. A helical transmembrane segment spans residues 576–596; sequence ARMLIAGTAFMVLGFIWVGMM. The Cytoplasmic segment spans residues 597–612; it reads RNLNVKNMTQTKGNVV.

The protein belongs to the major facilitator superfamily.

The protein localises to the cell tip. It localises to the cytoplasmic vesicle membrane. Its subcellular location is the cell membrane. In terms of biological role, major facilitator transporter involved in triacetylfusarinine C (TAFC) uptake. Can also transport ferricrocin and coprogen, but not ferrichrysin. MirB plays a crucial role for virulence in a murine model of pulmonary aspergillosis, indicating that TAFC-mediated iron uptake plays a dominant role during infection. The sequence is that of MFS siderochrome iron transporter B from Aspergillus fumigatus (strain ATCC MYA-4609 / CBS 101355 / FGSC A1100 / Af293) (Neosartorya fumigata).